Reading from the N-terminus, the 494-residue chain is 3-octaprenyl-4-hydroxybenzoate carboxy-lyase (494 aa).

Residue Asn172 coordinates Mn(2+). Prenylated FMN is bound by residues 175–177, 189–191, and 194–195; these read IYR, RWL, and RG. Residue Glu238 coordinates Mn(2+). Asp287 (proton donor) is an active-site residue.

This sequence belongs to the UbiD family. Homohexamer. The cofactor is prenylated FMN. Mn(2+) serves as cofactor.

The protein localises to the cell membrane. It carries out the reaction a 4-hydroxy-3-(all-trans-polyprenyl)benzoate + H(+) = a 2-(all-trans-polyprenyl)phenol + CO2. It functions in the pathway cofactor biosynthesis; ubiquinone biosynthesis. Catalyzes the decarboxylation of 3-octaprenyl-4-hydroxy benzoate to 2-octaprenylphenol, an intermediate step in ubiquinone biosynthesis. The chain is 3-octaprenyl-4-hydroxybenzoate carboxy-lyase from Citrobacter koseri (strain ATCC BAA-895 / CDC 4225-83 / SGSC4696).